Consider the following 134-residue polypeptide: Thionin-2.2 (134 aa).

The N-terminal stretch at 1-24 is a signal peptide; sequence MEGKTVISSLLIMSLVLAQIQVEA. 3 cysteine pairs are disulfide-bonded: Cys27-Cys64, Cys28-Cys56, and Cys40-Cys50. The propeptide at 71–134 is acidic domain; the sequence is DILENSGDAV…GGSTAAVKSA (64 aa).

It belongs to the plant thionin (TC 1.C.44) family. In terms of tissue distribution, low basal expression in seedlings. Also detected in rosette leaves.

Its subcellular location is the secreted. Functionally, thionins are small plant proteins which are toxic to animal cells. They seem to exert their toxic effect at the level of the cell membrane. Their precise function is not known. The sequence is that of Thionin-2.2 (THI2.2) from Arabidopsis thaliana (Mouse-ear cress).